Reading from the N-terminus, the 490-residue chain is 5'-3' exonuclease PLD3 (490 aa).

The Cytoplasmic portion of the chain corresponds to 1 to 38 (MKPKLMYQELKVPAEEPANELPMNEIEAWKAAEKKARW). A helical; Signal-anchor for type II membrane protein membrane pass occupies residues 39–59 (VLLVLILAVVGFGALMTQLFL). Residues 60–490 (WEYGDLHLFG…DSVGNACRLL (431 aa)) are Lumenal-facing. Intrachain disulfides connect Cys77–Cys239 and Cys81–Cys237. N-linked (GlcNAc...) asparagine glycans are attached at residues Asn97 and Asn132. The PLD phosphodiesterase 1 domain occupies 196–223 (THGVLHTKFWVVDQTHFYLGSANMDWRS). Catalysis depends on residues His201, Lys203, and Asp208. His201 functions as the Proton donor in the catalytic mechanism. Phosphate-binding residues include His201 and Lys203. Asn218 contacts phosphate. Residues Asn236, Asn284, and Asn387 are each glycosylated (N-linked (GlcNAc...) asparagine). Cys366 and Cys487 are disulfide-bonded. Positions 411-437 (YARVNHNKYMVTERATYIGTSNWSGNY) constitute a PLD phosphodiesterase 2 domain. His416 provides a ligand contact to phosphate. His416 serves as the catalytic Nucleophile. Phe438 serves as a coordination point for Mg(2+).

Belongs to the phospholipase D family. Homodimer. Interacts with APP. N-glycosylated. Post-translationally, proteolytically processed to a soluble form that is stable within endosomes and lysosomes. During transport through the secretory pathway becomes proteolysed by cysteine proteases, thereby releasing a stable soluble lysosomal lumenal polypeptide, whereas the transmembrane-bound fragment is rapidly degraded. Its transport route to lysosomes involves ubiquitination and the ESCRT complex. In terms of processing, ubiquitinated. Ubiquitination mediates sorting into lysosomes.

It localises to the endoplasmic reticulum membrane. Its subcellular location is the lysosome lumen. The protein resides in the early endosome membrane. It is found in the late endosome membrane. The protein localises to the golgi apparatus membrane. It localises to the endosome membrane. It carries out the reaction Exonucleolytic cleavage in the 5'- to 3'-direction to yield nucleoside 3'-phosphates.. The catalysed reaction is a 5'-end 5'-dephospho-ribonucleotidyl-ribonucleotide-RNA + H2O = a ribonucleoside 3'-phosphate + a 5'-end dephospho-ribonucleoside-RNA + H(+). It catalyses the reaction a ribonucleoside 3'-phosphate-2'-3'-cyclophospho-GMP + H2O = a ribonucleoside 3'-phosphate + 2',3'-cyclophospho-GMP + H(+). The enzyme catalyses a 5'-end 5'-dephospho-2'-deoxyribonucleotidyl-2'-deoxyribonucleotide in single-stranded DNA + H2O = a 5'-end dephospho-2'-deoxyribonucleoside in single-stranded DNA + a 2'-deoxyribonucleoside 3'-phosphate + H(+). It carries out the reaction a 5'-end 5'-phospho-2'-deoxyribonucleotide in single-stranded DNA + H2O = a 5'-end 5'-dephospho-2'-deoxyribonucleotide in single-stranded DNA + phosphate. The catalysed reaction is a 3-lyso-sn-glycero-1-phospho-(3'-acyl-1'-sn-glycerol) + a 1-acyl-sn-glycerol = a 3-acyl-sn-glycero-1-phospho-(3'-acyl-1'-sn-glycerol) + glycerol. It catalyses the reaction 3-lyso-sn-glycero-1-phospho-(3'-(9Z-octadecenoyl)-1'-sn-glycerol) + 1-(9Z-octadecenoyl)-sn-glycerol = 3-(9Z-octadecenoyl)-sn-glycero-1-phospho-(3'-(9Z-octadecenoyl)-1'-sn-glycerol) + glycerol. 5'-&gt;3' exonuclease that hydrolyzes the phosphodiester bond of single-stranded DNA (ssDNA) and RNA molecules to form nucleoside 3'-monophosphates and 5'-end 5'-hydroxy deoxyribonucleotide/ribonucleotide fragments. Partially redundant with PLD4, can cleave all four nucleotides displaying higher efficiency for ssDNA and RNA fragments initiated with uridine and guanosine residues and lower efficiency for cytidine-initiated substrates. As a result, it does not always degrade polynucleotides to the single nucleotide level, it can stall at specific sites sparing certain fragments from exonucleolytic degradation. Processes self and pathogenic ssDNA and RNA molecules that reach the endolysosomal compartment via phagocytosis or autophagy and may serve as 'danger' signals for recognition by innate immune receptors such as toll-like receptors (TLRs). Degrades mitochondrial CpG-rich ssDNA fragments to prevent TLR9 activation and autoinflammatory response, but it can cleave viral RNA to generate ligands for TLR7 activation and initiate antiviral immune responses. In plasmacytoid dendritic cells, it cooperates with endonuclease RNASET2 to release 2',3'-cyclic guanosine monophosphate (2',3'-cGMP), a potent stimulatory ligand for TLR7. Produces 2',3'-cGMPs and cytidine-rich RNA fragments that occupy TLR7 ligand-binding pockets and trigger a signaling-competent state. Can exert polynucleotide phosphatase activity toward 5'-phosphorylated ssDNA substrates although at a slow rate. Transphosphatidylase that catalyzes the exchange with R to S stereo-inversion of the glycerol moiety between (S,R)-lysophosphatidylglycerol (LPG) and monoacylglycerol (MAG) substrates to yield (S,S)-bis(monoacylglycero)phosphate (BMP). Can synthesize a variety of (S,S)-BMPs representing the main phospholipid constituent of lysosomal intralumenal vesicle (ILV) membranes that bind acid hydrolases for lipid degradation. Regulates the homeostasis and interorganellar communication of the endolysosomal system with an overall impact on cellular removal of dysfunctional organelles via autophagy as well as proper protein and lipid turnover. May play a role in myotube formation in response to ER stress. The polypeptide is 5'-3' exonuclease PLD3 (PLD3) (Pongo abelii (Sumatran orangutan)).